The chain runs to 102 residues: Small ribosomal subunit protein uS10 (102 aa).

This sequence belongs to the universal ribosomal protein uS10 family. Part of the 30S ribosomal subunit.

Functionally, involved in the binding of tRNA to the ribosomes. This is Small ribosomal subunit protein uS10 from Bacillus cereus (strain G9842).